The following is a 330-amino-acid chain: Beta-ketoacyl-[acyl-carrier-protein] synthase III (330 aa).

Residues cysteine 115 and histidine 255 contribute to the active site. The ACP-binding stretch occupies residues 256–260 (QANFR). Asparagine 285 is an active-site residue.

It belongs to the thiolase-like superfamily. FabH family. In terms of assembly, homodimer.

The protein resides in the cytoplasm. It catalyses the reaction malonyl-[ACP] + acetyl-CoA + H(+) = 3-oxobutanoyl-[ACP] + CO2 + CoA. The protein operates within lipid metabolism; fatty acid biosynthesis. Functionally, catalyzes the condensation reaction of fatty acid synthesis by the addition to an acyl acceptor of two carbons from malonyl-ACP. Catalyzes the first condensation reaction which initiates fatty acid synthesis and may therefore play a role in governing the total rate of fatty acid production. Possesses both acetoacetyl-ACP synthase and acetyl transacylase activities. Its substrate specificity determines the biosynthesis of branched-chain and/or straight-chain of fatty acids. In Helicobacter pylori (strain HPAG1), this protein is Beta-ketoacyl-[acyl-carrier-protein] synthase III.